We begin with the raw amino-acid sequence, 466 residues long: 3-isopropylmalate dehydratase large subunit (466 aa).

The [4Fe-4S] cluster site is built by cysteine 347, cysteine 407, and cysteine 410.

It belongs to the aconitase/IPM isomerase family. LeuC type 1 subfamily. In terms of assembly, heterodimer of LeuC and LeuD. [4Fe-4S] cluster serves as cofactor.

The enzyme catalyses (2R,3S)-3-isopropylmalate = (2S)-2-isopropylmalate. Its pathway is amino-acid biosynthesis; L-leucine biosynthesis; L-leucine from 3-methyl-2-oxobutanoate: step 2/4. Catalyzes the isomerization between 2-isopropylmalate and 3-isopropylmalate, via the formation of 2-isopropylmaleate. This Vibrio vulnificus (strain CMCP6) protein is 3-isopropylmalate dehydratase large subunit.